Here is a 1219-residue protein sequence, read N- to C-terminus: Cullin-associated NEDD8-dissociated protein 1 (1219 aa).

Residue A2 is modified to N-acetylalanine. 18 HEAT repeats span residues D44–E81, R83–P119, K209–Y244, T248–R288, E327–E363, K367–N404, Q423–D460, D464–P503, A599–N636, C639–D676, K808–L848, A850–G883, S927–E964, L966–E998, E1002–N1039, G1043–L1079, N1101–S1137, and A1141–A1180. The segment at F311–E340 is disordered. The segment covering N314 to E340 has biased composition (acidic residues).

Belongs to the CAND family. In terms of assembly, interacts with CUL1 and CUL4. Binds unneddylated CUL1, but cannot bind CUL1 once it has been neddylated. Highly expressed in roots. Expressed in stems, flowers and siliques.

Key assembly factor of SCF (SKP1-CUL1-F-box protein) E3 ubiquitin ligase complexes that promotes the exchange of the substrate-recognition F-box subunit in SCF complexes, thereby playing a key role in the cellular repertoire of SCF complexes. Acts as a F-box protein exchange factor. Required for SCF(TIR1) function. Modulates SCF(TIR1) function through its interactions with the CUL1 subunit. Represses photomorphogenesis by promoting HY5 degradation in darkness. The chain is Cullin-associated NEDD8-dissociated protein 1 (CAND1) from Arabidopsis thaliana (Mouse-ear cress).